The chain runs to 466 residues: CBL-interacting protein kinase 20 (466 aa).

A Protein kinase domain is found at 12 to 276 (YELGRSLGHG…IDELVKHPWF (265 aa)). ATP-binding positions include 18-26 (LGHGTFSKV) and Lys-41. Asp-139 functions as the Proton acceptor in the catalytic mechanism. Positions 162-191 (DFGLSALSASRRHDGLLHTTCGTPSYVAPE) are activation loop. The NAF domain occupies 297–329 (KPANAAMNMKPASLNAFDIISLSQGFDLSGMFC). Positions 337–366 (TQDQLFVTGKPATAIVSRLEEIAETEHFTV) are PPI. The interval 446–466 (ASEKNQLPAVSEVSPLSSPRN) is disordered.

It belongs to the protein kinase superfamily. CAMK Ser/Thr protein kinase family. SNF1 subfamily. The cofactor is Mn(2+).

It carries out the reaction L-seryl-[protein] + ATP = O-phospho-L-seryl-[protein] + ADP + H(+). It catalyses the reaction L-threonyl-[protein] + ATP = O-phospho-L-threonyl-[protein] + ADP + H(+). In terms of biological role, CIPK serine-threonine protein kinases interact with CBL proteins. Binding of a CBL protein to the regulatory NAF domain of CIPK protein lead to the activation of the kinase in a calcium-dependent manner. The chain is CBL-interacting protein kinase 20 (CIPK20) from Oryza sativa subsp. japonica (Rice).